The primary structure comprises 2192 residues: Non-reducing polyketide synthase 1 (2192 aa).

Positions 5 to 243 (LLLGDQTADQ…VSIPIYAPYH (239 aa)) are N-terminal acylcarrier protein transacylase domain (SAT). Positions 374–806 (NDKIAIVGMS…GGNTSLLLED (433 aa)) constitute a Ketosynthase family 3 (KS3) domain. Residues Cys546, His681, and His724 each act as for beta-ketoacyl synthase activity in the active site. The malonyl-CoA:ACP transacylase (MAT) domain stretch occupies residues 905–1218 (FCFTGQGSQY…ANSMCALFLA (314 aa)). The For acyl/malonyl transferase activity role is filled by Ser993. Positions 1293–1610 (SCQKIIDEEF…RKVLNTFLPP (318 aa)) are product template (PT) domain. The tract at residues 1295-1430 (QKIIDEEFSA…CTVKFEDINT (136 aa)) is N-terminal hotdog fold. The PKS/mFAS DH domain occupies 1295–1605 (QKIIDEEFSA…FQKIPRKVLN (311 aa)). Residue His1327 is the Proton acceptor; for dehydratase activity of the active site. Positions 1458–1605 (AHVIGRGLAY…FQKIPRKVLN (148 aa)) are C-terminal hotdog fold. Asp1518 (proton donor; for dehydratase activity) is an active-site residue. Positions 1639-1668 (TQAQPAKAVPKQVTVAAPTPKAAPKKADLK) are disordered. In terms of domain architecture, Carrier 1 spans 1670-1747 (PAGPTIITRV…EMKKFFSQYD (78 aa)). O-(pantetheine 4'-phosphoryl)serine is present on Ser1707. The disordered stretch occupies residues 1748–1788 (GEVGTPEQDDSDSDSETSGDASTPMSEVGTPMTIPSSAVSE). Positions 1754–1764 (EQDDSDSDSET) are enriched in acidic residues. One can recognise a Carrier 2 domain in the interval 1798–1875 (APASGEVSIA…DVENALDMRP (78 aa)). Position 1835 is an O-(pantetheine 4'-phosphoryl)serine (Ser1835). Residues 1913 to 2164 (SKYPAATSVL…SMMKPPHVSI (252 aa)) form a thioesterase (TE) domain region.

In terms of biological role, non-reducing polyketide synthase; part of the gene cluster that mediates the biosynthesis of elsinochromes, pigments consisting of at least four interconvertible tautomers (A, B, C and D) that have a core phenolic quinone to which various side chains are attached and which play an important role in fungal pathogenesis. The non-reducing polyketide synthase PKS1 was proposed to iteratively catalyze decarboxylation between acetyl-CoA and malonyl-CoA subunits for polyketide chain elongation. The released polyketide undergoes cyclization to form an aromatic ring, and proceeds via serial modification steps to produce the heptaketide back- bone of elsinochrome. As elsinochrome has a symmetrical structure, two identical heptaketides are fused to form a core 1,2-dihydrobenzo-perylene ring structure, which can then be successively modified to produce the various derivatives of elsinochrome. Some of these reactions may be cooperatively carried out, at least in part, by the products of RDT1, OXR1 and PKS1. PRF1, embedded within the elsinochrome cluster possibly functions to stabilize some of the biosynthetic enzymes required for elsinochrome production. As prefoldin is a hexamer containing 2 a and 4 b subunits, additional prefoldin subunits, whose coding genes may not immediately link to the elsinochrome biosynthetic gene cluster, are required to fulfill the chaperone function. In addition, no methyltransferase-coding gene exists within the biosynthetic gene cluster, even though elsinochrome has four methyl groups at positions C3, C7, C8 and C12. Apparently, the identified gene cluster does not contain the entire entourage of genes responsible for elsinochrome biosynthesis. Once elsinochrome is synthesized, it must be exported outside the fungal cells, which is probably accomplished by the ECT1 transporter, to avoid toxicity. In Elsinoe fawcettii (Citrus scab fungus), this protein is Non-reducing polyketide synthase 1.